Reading from the N-terminus, the 235-residue chain is Pyridoxine 5'-phosphate synthase (235 aa).

N7 provides a ligand contact to 3-amino-2-oxopropyl phosphate. 9–10 (DH) contributes to the 1-deoxy-D-xylulose 5-phosphate binding site. R18 is a binding site for 3-amino-2-oxopropyl phosphate. The Proton acceptor role is filled by H43. 1-deoxy-D-xylulose 5-phosphate is bound by residues R45 and H50. Residue E70 is the Proton acceptor of the active site. T100 is a binding site for 1-deoxy-D-xylulose 5-phosphate. H187 acts as the Proton donor in catalysis. 3-amino-2-oxopropyl phosphate contacts are provided by residues G188 and 209–210 (GH).

The protein belongs to the PNP synthase family. Homooctamer; tetramer of dimers.

It is found in the cytoplasm. It catalyses the reaction 3-amino-2-oxopropyl phosphate + 1-deoxy-D-xylulose 5-phosphate = pyridoxine 5'-phosphate + phosphate + 2 H2O + H(+). The protein operates within cofactor biosynthesis; pyridoxine 5'-phosphate biosynthesis; pyridoxine 5'-phosphate from D-erythrose 4-phosphate: step 5/5. In terms of biological role, catalyzes the complicated ring closure reaction between the two acyclic compounds 1-deoxy-D-xylulose-5-phosphate (DXP) and 3-amino-2-oxopropyl phosphate (1-amino-acetone-3-phosphate or AAP) to form pyridoxine 5'-phosphate (PNP) and inorganic phosphate. This chain is Pyridoxine 5'-phosphate synthase, found in Desulfatibacillum aliphaticivorans.